Consider the following 81-residue polypeptide: Putative membrane protein insertion efficiency factor (81 aa).

The protein belongs to the UPF0161 family.

It localises to the cell inner membrane. Functionally, could be involved in insertion of integral membrane proteins into the membrane. The sequence is that of Putative membrane protein insertion efficiency factor from Pseudomonas savastanoi pv. phaseolicola (strain 1448A / Race 6) (Pseudomonas syringae pv. phaseolicola (strain 1448A / Race 6)).